The chain runs to 639 residues: 2-oxoacid:ferredoxin oxidoreductase 1, subunit alpha (639 aa).

The YPITP motif signature appears at 266–270 (YPITP). Residues threonine 269 and arginine 352 each coordinate substrate.

In terms of assembly, heterodimer composed of an alpha and a beta subunit.

The enzyme catalyses a 2-oxocarboxylate + 2 oxidized [2Fe-2S]-[ferredoxin] + CoA = an acyl-CoA + 2 reduced [2Fe-2S]-[ferredoxin] + CO2 + H(+). Its function is as follows. Catalyzes the coenzyme A-dependent oxidative decarboxylation of different 2-oxoacids such as pyruvate, 2-oxobutyrate and glyoxylate to form their CoA derivatives. This Aeropyrum pernix (strain ATCC 700893 / DSM 11879 / JCM 9820 / NBRC 100138 / K1) protein is 2-oxoacid:ferredoxin oxidoreductase 1, subunit alpha.